A 95-amino-acid chain; its full sequence is Protein ECS1 (95 aa).

An N-terminal signal peptide occupies residues 1–27 (MASSIVSSMFLFLLLLLVFPHIDNVLG).

As to expression, expressed in leaves, flowers and stems, but not in roots.

It is found in the secreted. It localises to the cell wall. Maybe involved in defense responses to X.campestris, but probably not a X.campestris pv. campestris race 750 (e.g. Xcc750) resistance gene; according to genetic data, linked to a locus influencing resistance to Xcc750. The chain is Protein ECS1 from Arabidopsis thaliana (Mouse-ear cress).